Reading from the N-terminus, the 324-residue chain is MLGPAYNHTMETPASFLLVGIPGLQSSHLWLAISLSAMYITALLGNTLIVTAIWMDSTRHEPMYCFLCVLAAVDIVMASSVVPKMVSIFCSGDSSISFSACFTQMFFVHLATAVETGLLLTMAFDRYVAICKPLHYKRILTPQVMLGMSMAVTIRAVTFMTPLSWMMNHLPFCGSNVVVHSYCKHIALARLACADPVPSSLYSLIGSSLMVGSDVAFIAASYILILRAVFDLSSKTAQLKALSTCGSHVGVMALYYLPGMASIYAAWLGQDIVPLHTQVLLADLYVIIPATLNPIIYGMRTKQLLEGIWSYLMHFLFDHSNLGS.

Residues 1 to 29 lie on the Extracellular side of the membrane; sequence MLGPAYNHTMETPASFLLVGIPGLQSSHL. N-linked (GlcNAc...) asparagine glycosylation is present at Asn-7. A helical membrane pass occupies residues 30 to 50; it reads WLAISLSAMYITALLGNTLIV. The Cytoplasmic portion of the chain corresponds to 51 to 58; the sequence is TAIWMDST. The helical transmembrane segment at 59–79 threads the bilayer; sequence RHEPMYCFLCVLAAVDIVMAS. The Extracellular segment spans residues 80–103; that stretch reads SVVPKMVSIFCSGDSSISFSACFT. Cys-101 and Cys-193 form a disulfide bridge. Residues 104 to 124 form a helical membrane-spanning segment; sequence QMFFVHLATAVETGLLLTMAF. The Cytoplasmic portion of the chain corresponds to 125–143; the sequence is DRYVAICKPLHYKRILTPQ. The chain crosses the membrane as a helical span at residues 144–164; sequence VMLGMSMAVTIRAVTFMTPLS. At 165-200 the chain is on the extracellular side; the sequence is WMMNHLPFCGSNVVVHSYCKHIALARLACADPVPSS. Residues 201-221 form a helical membrane-spanning segment; the sequence is LYSLIGSSLMVGSDVAFIAAS. Over 222 to 241 the chain is Cytoplasmic; that stretch reads YILILRAVFDLSSKTAQLKA. Residues 242-262 form a helical membrane-spanning segment; the sequence is LSTCGSHVGVMALYYLPGMAS. Residues 263–278 lie on the Extracellular side of the membrane; sequence IYAAWLGQDIVPLHTQ. Residues 279–299 traverse the membrane as a helical segment; the sequence is VLLADLYVIIPATLNPIIYGM. The Cytoplasmic portion of the chain corresponds to 300–324; that stretch reads RTKQLLEGIWSYLMHFLFDHSNLGS.

The protein belongs to the G-protein coupled receptor 1 family.

Its subcellular location is the cell membrane. In terms of biological role, odorant receptor. This chain is Olfactory receptor 52I1 (OR52I1), found in Homo sapiens (Human).